The chain runs to 310 residues: Vomeronasal type-1 receptor 101 (310 aa).

At 1–19 the chain is on the extracellular side; it reads MNKVNILPSDTNMKITLFS. A helical membrane pass occupies residues 20–40; that stretch reads ELSVGISANSILFFAHLCMFF. Residues 41-49 are Cytoplasmic-facing; it reads EENRSKPID. A helical transmembrane segment spans residues 50–70; it reads LCIAFLSLTQLMLLVTMGLIA. Topologically, residues 71-93 are extracellular; it reads ADMFMAQGIWDITTCRSLIYFHR. Cysteine 85 and cysteine 172 are oxidised to a cystine. Residues 94–114 form a helical membrane-spanning segment; it reads LLRGFNLCAACLLHILWTFTL. Residues 115 to 134 are Cytoplasmic-facing; the sequence is SPRSSCLTKFKHKSPHHISG. The chain crosses the membrane as a helical span at residues 135–155; it reads AYLFFCVLYMSFSSHLFVLVI. Over 156–193 the chain is Extracellular; it reads ATSNLTSDHFMYVTQSCSLLPMSYSRTSTFSLLMVTRE. N-linked (GlcNAc...) asparagine glycosylation occurs at asparagine 159. The chain crosses the membrane as a helical span at residues 194–214; it reads VFLISLMALSSGYMVTLLWRH. Over 215–238 the chain is Cytoplasmic; it reads KKQAQHLHSTRLSSKASPQQRATR. A helical transmembrane segment spans residues 239 to 259; it reads TILLLMTFFVVFYILGTVIFH. Residues 260 to 268 are Extracellular-facing; sequence SRTKFKDGS. Residues 269–289 form a helical membrane-spanning segment; it reads IFYCVQIIVSHSYATISPFVF. Residues 290-310 lie on the Cytoplasmic side of the membrane; that stretch reads VFSEKRIIKFFRSMCGRIVNT.

It belongs to the G-protein coupled receptor 1 family. In terms of tissue distribution, expressed in 1-4% of neurons of the vomeronasal organ. Only one pheromone receptor gene may be expressed in a particular neuron. Not expressed in the main olfactory epithelium.

Its subcellular location is the cell membrane. In terms of biological role, putative pheromone receptor implicated in the regulation of social as well as reproductive behavior. The chain is Vomeronasal type-1 receptor 101 (Vom1r101) from Rattus norvegicus (Rat).